We begin with the raw amino-acid sequence, 71 residues long: ATP synthase F(0) complex subunit e, mitochondrial (71 aa).

Lys34 bears the N6-acetyllysine mark. Residue Ser68 is modified to Phosphoserine.

The protein belongs to the ATPase e subunit family. In terms of assembly, component of the ATP synthase complex composed at least of ATP5F1A/subunit alpha, ATP5F1B/subunit beta, ATP5MC1/subunit c (homooctomer), MT-ATP6/subunit a, MT-ATP8/subunit 8, ATP5ME/subunit e, ATP5MF/subunit f, ATP5MG/subunit g, ATP5MK/subunit k, ATP5MJ/subunit j, ATP5F1C/subunit gamma, ATP5F1D/subunit delta, ATP5F1E/subunit epsilon, ATP5PF/subunit F6, ATP5PB/subunit b, ATP5PD/subunit d, ATP5PO/subunit OSCP. ATP synthase complex consists of a soluble F(1) head domain (subunits alpha(3) and beta(3)) - the catalytic core - and a membrane F(0) domain - the membrane proton channel (subunits c, a, 8, e, f, g, k and j). These two domains are linked by a central stalk (subunits gamma, delta, and epsilon) rotating inside the F1 region and a stationary peripheral stalk (subunits F6, b, d, and OSCP). Mammary gland, liver, kidney, heart, spleen, brain and lung.

The protein resides in the mitochondrion. It is found in the mitochondrion inner membrane. Subunit e, of the mitochondrial membrane ATP synthase complex (F(1)F(0) ATP synthase or Complex V) that produces ATP from ADP in the presence of a proton gradient across the membrane which is generated by electron transport complexes of the respiratory chain. ATP synthase complex consist of a soluble F(1) head domain - the catalytic core - and a membrane F(1) domain - the membrane proton channel. These two domains are linked by a central stalk rotating inside the F(1) region and a stationary peripheral stalk. During catalysis, ATP synthesis in the catalytic domain of F(1) is coupled via a rotary mechanism of the central stalk subunits to proton translocation. In vivo, can only synthesize ATP although its ATP hydrolase activity can be activated artificially in vitro. Part of the complex F(0) domain. This chain is ATP synthase F(0) complex subunit e, mitochondrial, found in Mus musculus (Mouse).